Reading from the N-terminus, the 431-residue chain is Tol-Pal system protein TolB (431 aa).

A signal peptide spans 1-19; sequence MKRLLFFLICVFFSKTSYS.

The protein belongs to the TolB family. As to quaternary structure, the Tol-Pal system is composed of five core proteins: the inner membrane proteins TolA, TolQ and TolR, the periplasmic protein TolB and the outer membrane protein Pal. They form a network linking the inner and outer membranes and the peptidoglycan layer.

It localises to the periplasm. Its function is as follows. Part of the Tol-Pal system, which plays a role in outer membrane invagination during cell division and is important for maintaining outer membrane integrity. TolB occupies a key intermediary position in the Tol-Pal system because it communicates directly with both membrane-embedded components, Pal in the outer membrane and TolA in the inner membrane. This chain is Tol-Pal system protein TolB, found in Wigglesworthia glossinidia brevipalpis.